Consider the following 230-residue polypeptide: UPF0173 metal-dependent hydrolase Acid_3917 (230 aa).

This sequence belongs to the UPF0173 family.

The chain is UPF0173 metal-dependent hydrolase Acid_3917 from Solibacter usitatus (strain Ellin6076).